Here is a 316-residue protein sequence, read N- to C-terminus: Secreted effector protein SifB (316 aa).

This sequence belongs to the Sif family.

The protein resides in the secreted. Its subcellular location is the host cytoplasm. Its function is as follows. Effector proteins function to alter host cell physiology and promote bacterial survival in host tissues. The polypeptide is Secreted effector protein SifB (sifB) (Salmonella typhimurium (strain LT2 / SGSC1412 / ATCC 700720)).